Consider the following 23-residue polypeptide: 48 kDa cell wall protein (23 aa).

Its subcellular location is the secreted. The protein localises to the cell wall. The chain is 48 kDa cell wall protein from Nicotiana tabacum (Common tobacco).